Here is a 609-residue protein sequence, read N- to C-terminus: Phosphomethylpyrimidine synthase (609 aa).

Substrate-binding positions include N219, M248, Y277, H313, 333 to 335, 374 to 377, and E413; these read SRG and DGLR. Residue H417 coordinates Zn(2+). Y440 contacts substrate. Residue H481 participates in Zn(2+) binding. Residues C561, C564, and C569 each coordinate [4Fe-4S] cluster.

The protein belongs to the ThiC family. Requires [4Fe-4S] cluster as cofactor.

The enzyme catalyses 5-amino-1-(5-phospho-beta-D-ribosyl)imidazole + S-adenosyl-L-methionine = 4-amino-2-methyl-5-(phosphooxymethyl)pyrimidine + CO + 5'-deoxyadenosine + formate + L-methionine + 3 H(+). It participates in cofactor biosynthesis; thiamine diphosphate biosynthesis. Catalyzes the synthesis of the hydroxymethylpyrimidine phosphate (HMP-P) moiety of thiamine from aminoimidazole ribotide (AIR) in a radical S-adenosyl-L-methionine (SAM)-dependent reaction. In Deinococcus geothermalis (strain DSM 11300 / CIP 105573 / AG-3a), this protein is Phosphomethylpyrimidine synthase.